A 176-amino-acid polypeptide reads, in one-letter code: Centromere protein R (176 aa).

A Glycyl lysine isopeptide (Lys-Gly) (interchain with G-Cter in SUMO2) cross-link involves residue Lys-8. Ser-17 bears the Phosphoserine mark. Positions 20 to 50 are DD1; it reads PSKIVRKKSITAYSPTTGTYQLSPFSSPATP. Residue Lys-22 forms a Glycyl lysine isopeptide (Lys-Gly) (interchain with G-Cter in SUMO2) linkage. Ser-28 carries the phosphoserine modification. Residues 34 to 48 show a composition bias toward polar residues; sequence PTTGTYQLSPFSSPA. Residues 34-78 form a disordered region; it reads PTTGTYQLSPFSSPATPKEQEHRNGPSNETRKRSNLSSPVRQEST. The span at 51–65 shows a compositional bias: basic and acidic residues; the sequence is KEQEHRNGPSNETRK. Residues 63–66 carry the Nuclear localization signal motif; sequence TRKR. Ser-71 carries the phosphoserine modification. Residues 82-112 adopt a coiled-coil conformation; sequence RDGFMVLLSKIEISSEKTMEIMKNLSSIQAL. The LXXIL motif motif lies at 171–175; the sequence is LKAIL.

In terms of assembly, homodimer; mediated by the coiled coil domain. Interacts with CCNA2 and MTA1. Interacts with NFKB1 NF-kappa-B subunit. Component of the CENPA-CAD complex, composed of CENPI, CENPK, CENPL, CENPO, CENPP, CENPQ, CENPR and CENPS. The CENPA-CAD complex interacts with the CENPA-NAC complex, at least composed of CENPA, CENPC, CENPH, CENPM, CENPN, CENPT and CENPU. Interacts with TASOR. As to expression, expressed in the spermatogonia and spermatocytes.

The protein localises to the nucleus. It is found in the chromosome. Its subcellular location is the centromere. The protein resides in the kinetochore. Its function is as follows. Transcription coregulator that can have both coactivator and corepressor functions. Involved in the coactivation of nuclear receptors for retinoid X (RXRs) and thyroid hormone (TRs) in a ligand-dependent fashion. In contrast, it does not coactivate nuclear receptors for retinoic acid, vitamin D, progesterone receptor, nor glucocorticoid. Acts as a coactivator for estrogen receptor alpha. Acts as a transcriptional corepressor via its interaction with the NFKB1 NF-kappa-B subunit, possibly by interfering with the transactivation domain of NFKB1. Induces apoptosis in breast cancer cells, but not in other cancer cells, via a caspase-2 mediated pathway that involves mitochondrial membrane permeabilization but does not require other caspases. May also act as an inhibitor of cyclin A-associated kinase. Also acts a component of the CENPA-CAD (nucleosome distal) complex, a complex recruited to centromeres which is involved in assembly of kinetochore proteins, mitotic progression and chromosome segregation. May be involved in incorporation of newly synthesized CENPA into centromeres via its interaction with the CENPA-NAC complex. This Mus musculus (Mouse) protein is Centromere protein R (Itgb3bp).